Reading from the N-terminus, the 156-residue chain is Snaclec subunit B (156 aa).

Residues 1 to 23 (MGRSIFVNLGLLVVAFSLRGSEA) form the signal peptide. Cystine bridges form between Cys-25/Cys-36, Cys-53/Cys-144, and Cys-119/Cys-136. Positions 32 to 145 (YDKYCYKVFD…CKSTLPFTCK (114 aa)) constitute a C-type lectin domain.

Belongs to the snaclec family. In terms of assembly, heterodimer of subunits A and B; disulfide-linked. Expressed by the venom gland.

The protein resides in the secreted. Functionally, interferes with one step of hemostasis (modulation of platelet aggregation, or coagulation cascade, for example). The protein is Snaclec subunit B of Philodryas olfersii (Green snake).